A 100-amino-acid polypeptide reads, in one-letter code: Small ribosomal subunit protein uS14c (100 aa).

Residues M1–S54 form a disordered region.

The protein belongs to the universal ribosomal protein uS14 family. In terms of assembly, part of the 30S ribosomal subunit.

It is found in the plastid. Its subcellular location is the chloroplast. Functionally, binds 16S rRNA, required for the assembly of 30S particles. This is Small ribosomal subunit protein uS14c from Piper cenocladum (Ant piper).